The primary structure comprises 774 residues: Penicillin acylase 2 proenzyme (774 aa).

The active-site Nucleophile is serine 240.

The protein belongs to the peptidase S45 family. As to quaternary structure, heterodimer of a small subunit and a large subunit processed from the same precursor.

The catalysed reaction is a penicillin + H2O = 6-aminopenicillanate + a carboxylate. In Pseudomonas sp. (strain SE83), this protein is Penicillin acylase 2 proenzyme (acyII).